A 465-amino-acid polypeptide reads, in one-letter code: Hexokinase-4 (465 aa).

Residues 10-454 (AAKKEKVEQI…SGRGAALVSA (445 aa)) form the Hexokinase domain. A hexokinase small subdomain region spans residues 67–203 (EGSEVGDFLS…DFEMDVVAMV (137 aa)). 78 to 83 (DLGGTN) serves as a coordination point for ATP. Residues 151-152 (SF), 168-169 (TK), and 204-205 (ND) contribute to the substrate site. A hexokinase large subdomain region spans residues 204-443 (NDTVATMISC…CEITFIESEE (240 aa)). Position 228 (T228) interacts with ATP. N231, E256, and E290 together coordinate substrate. ATP-binding positions include 295–296 (GK), 332–336 (TRFVS), and 411–415 (SVYKL).

Belongs to the hexokinase family. Monomer. Interacts with MIDN; the interaction occurs preferentially at low glucose levels and results in inhibition of hexokinase activity. Interacts with GCKR; leading to sequestration in the nucleus.

It is found in the cytoplasm. It localises to the nucleus. The protein localises to the mitochondrion. It catalyses the reaction a D-hexose + ATP = a D-hexose 6-phosphate + ADP + H(+). The catalysed reaction is D-fructose + ATP = D-fructose 6-phosphate + ADP + H(+). It carries out the reaction D-glucose + ATP = D-glucose 6-phosphate + ADP + H(+). The enzyme catalyses D-mannose + ATP = D-mannose 6-phosphate + ADP + H(+). It participates in carbohydrate metabolism; hexose metabolism. Its pathway is carbohydrate degradation; glycolysis; D-glyceraldehyde 3-phosphate and glycerone phosphate from D-glucose: step 1/4. Its activity is regulated as follows. Subject to allosteric regulation. Low glucose and high fructose-6-phosphate triggers association with the inhibitor GCKR followed by sequestration in the nucleus. In terms of biological role, catalyzes the phosphorylation of hexose, such as D-glucose, D-fructose and D-mannose, to hexose 6-phosphate (D-glucose 6-phosphate, D-fructose 6-phosphate and D-mannose 6-phosphate, respectively). Compared to other hexokinases, has a weak affinity for D-glucose, and is effective only when glucose is abundant. Mainly expressed in pancreatic beta cells and the liver and constitutes a rate-limiting step in glucose metabolism in these tissues. Since insulin secretion parallels glucose metabolism and the low glucose affinity of GCK ensures that it can change its enzymatic activity within the physiological range of glucose concentrations, GCK acts as a glucose sensor in the pancreatic beta cell. In pancreas, plays an important role in modulating insulin secretion. In liver, helps to facilitate the uptake and conversion of glucose by acting as an insulin-sensitive determinant of hepatic glucose usage. Required to provide D-glucose 6-phosphate for the synthesis of glycogen. Mediates the initial step of glycolysis by catalyzing phosphorylation of D-glucose to D-glucose 6-phosphate. This is Hexokinase-4 from Homo sapiens (Human).